Here is a 96-residue protein sequence, read N- to C-terminus: MSWFRWDGDDLILECHLQPAARSDDFCGLHGDRLKIRLTAPPVEGKANAYLMGFLAKAFGVSKSQVSLLSGELNRQKRVRIGAPKKLPDLPGLCRP.

Belongs to the UPF0235 family.

The polypeptide is UPF0235 protein Pfl01_5322 (Pseudomonas fluorescens (strain Pf0-1)).